The primary structure comprises 241 residues: Homeobox protein TGIF2LX (241 aa).

2 disordered regions span residues 1-56 and 115-213; these read MEAA…PKGY and RHGN…EYPD. Positions 21-39 are enriched in polar residues; it reads AKTQSPAQDTSTVSRNSAD. The segment at residues 48–111 is a DNA-binding region (homeobox; TALE-type); the sequence is EHTKKPKGYL…INARRRILPD (64 aa).

Belongs to the TALE/TGIF homeobox family.

It localises to the nucleus. Its function is as follows. May have a transcription role in testis. The sequence is that of Homeobox protein TGIF2LX (TGIF2LX) from Hylobates lar (Lar gibbon).